The sequence spans 230 residues: MDTVTTNIVTTDIRLLRLLQLSSVGLPVGGFAFSQGMEYAIDQGWVKNKTEVSDWIGLQLQQSLARVDLPVLRLCMDAAKQQNTERLFELNDLVLACRETKELRLNDTAMGEALFRLMSSLQIDTPFKRLDEMSFVTLFAIAANHWGLQVDLACLGFAWSWLENQIAAATKLVPLGQTQAQELLGELQTDIRHAIAMSLNIEEERVGAGLPAIAIASALHETQYSRLFRS.

The protein belongs to the UreF family. As to quaternary structure, ureD, UreF and UreG form a complex that acts as a GTP-hydrolysis-dependent molecular chaperone, activating the urease apoprotein by helping to assemble the nickel containing metallocenter of UreC. The UreE protein probably delivers the nickel.

The protein localises to the cytoplasm. Functionally, required for maturation of urease via the functional incorporation of the urease nickel metallocenter. The chain is Urease accessory protein UreF from Marinomonas sp. (strain MWYL1).